The sequence spans 350 residues: Glutamyl-tRNA reductase (350 aa).

Substrate is bound by residues 53 to 56 (TCNR), Ser-105, 110 to 112 (ETQ), and Gln-116. Cys-54 serves as the catalytic Nucleophile. Residue 185 to 190 (GAGETA) participates in NADP(+) binding.

The protein belongs to the glutamyl-tRNA reductase family. In terms of assembly, homodimer.

The catalysed reaction is (S)-4-amino-5-oxopentanoate + tRNA(Glu) + NADP(+) = L-glutamyl-tRNA(Glu) + NADPH + H(+). The protein operates within porphyrin-containing compound metabolism; protoporphyrin-IX biosynthesis; 5-aminolevulinate from L-glutamyl-tRNA(Glu): step 1/2. Its function is as follows. Catalyzes the NADPH-dependent reduction of glutamyl-tRNA(Glu) to glutamate 1-semialdehyde (GSA). The polypeptide is Glutamyl-tRNA reductase (Deinococcus radiodurans (strain ATCC 13939 / DSM 20539 / JCM 16871 / CCUG 27074 / LMG 4051 / NBRC 15346 / NCIMB 9279 / VKM B-1422 / R1)).